We begin with the raw amino-acid sequence, 190 residues long: Holliday junction branch migration complex subunit RuvA (190 aa).

The interval 1 to 64 (MIGSLTGIIE…DNLTQLYGFL (64 aa)) is domain I. The tract at residues 65–142 (DKQEQDYMRM…KMPIEETLII (78 aa)) is domain II. Residue lysine 143 is a region of interest, flexible linker. Positions 143 to 190 (KEDDSLAALISLGYDKLKAFNAIQEIKANFPDDSIQEIIRKALQKLSQ) are domain III.

Belongs to the RuvA family. As to quaternary structure, homotetramer. Forms an RuvA(8)-RuvB(12)-Holliday junction (HJ) complex. HJ DNA is sandwiched between 2 RuvA tetramers; dsDNA enters through RuvA and exits via RuvB. An RuvB hexamer assembles on each DNA strand where it exits the tetramer. Each RuvB hexamer is contacted by two RuvA subunits (via domain III) on 2 adjacent RuvB subunits; this complex drives branch migration. In the full resolvosome a probable DNA-RuvA(4)-RuvB(12)-RuvC(2) complex forms which resolves the HJ.

It is found in the cytoplasm. In terms of biological role, the RuvA-RuvB-RuvC complex processes Holliday junction (HJ) DNA during genetic recombination and DNA repair, while the RuvA-RuvB complex plays an important role in the rescue of blocked DNA replication forks via replication fork reversal (RFR). RuvA specifically binds to HJ cruciform DNA, conferring on it an open structure. The RuvB hexamer acts as an ATP-dependent pump, pulling dsDNA into and through the RuvAB complex. HJ branch migration allows RuvC to scan DNA until it finds its consensus sequence, where it cleaves and resolves the cruciform DNA. In Ehrlichia chaffeensis (strain ATCC CRL-10679 / Arkansas), this protein is Holliday junction branch migration complex subunit RuvA.